The primary structure comprises 192 residues: Adenine phosphoribosyltransferase 2 (192 aa).

It belongs to the purine/pyrimidine phosphoribosyltransferase family. As to quaternary structure, homodimer.

The protein localises to the cytoplasm. The catalysed reaction is AMP + diphosphate = 5-phospho-alpha-D-ribose 1-diphosphate + adenine. Its pathway is purine metabolism; AMP biosynthesis via salvage pathway; AMP from adenine: step 1/1. Functionally, catalyzes a salvage reaction resulting in the formation of AMP, that is energically less costly than de novo synthesis. May contribute to the recycling of adenine into adenylate nucleotides and the inactivation of cytokinins by phosphoribosylation. Possesses low activity toward adenine and cytokinins. This Arabidopsis thaliana (Mouse-ear cress) protein is Adenine phosphoribosyltransferase 2 (APT2).